The primary structure comprises 414 residues: MKYMVLFSGLLFSNVLVASELPDFLDMNDIENAKFQCLGESPQYSAQDQKYIDILWEETLTYLRAYAEALTNDQNSGCLNSDIAMVDSTEGGQHMCVMDRRDMKLMVKNVYQVINNADAAKKCFGAREDVSWIYSPGGELESRSEVAQWINRTTFKQFFDKQVTDKEVQQYGKSFTENFYKMVTGSEIKMPAVFPHDISANALPNLWASAGWFPMYAEESERNDKNFNNIRGGYAYAEIFGHWGLLRIDEINGEKVGAEIGMTVQAVNSLYPFHNHAVSEMYYNMRTPACANQFRTMAIREDSPLIRTVKEDSKVRRVQFDEGQHNSQTMWLSGSNAQDSLTYFHQNTIHAFDIDGQCEASPEERAIVSVWARSNAHDTRNDYGTTLLCESAKHPGTPAKRGEVIQCDLTKVKW.

Positions 1–18 (MKYMVLFSGLLFSNVLVA) are cleaved as a signal peptide.

It belongs to the DMSP lyase DddY family.

It is found in the periplasm. The catalysed reaction is S,S-dimethyl-beta-propiothetin = acrylate + dimethyl sulfide + H(+). Catalyzes the cleavage of dimethylsulfoniopropionate (DMSP) into dimethyl sulfide (DMS) and acrylate. This Shewanella woodyi (strain ATCC 51908 / MS32) protein is Dimethylsulfoniopropionate lyase DddY.